The primary structure comprises 610 residues: Dopamine beta-hydroxylase (610 aa).

Residues 1–9 lie on the Cytoplasmic side of the membrane; the sequence is MQVPSPSVR. The chain crosses the membrane as a helical; Signal-anchor for type II membrane protein span at residues 10–30; that stretch reads EAASMYGTAVAVFLVILVAAL. The Intragranular portion of the chain corresponds to 31 to 610; it reads QGSAPAESPF…TVLNISGGKG (580 aa). In terms of domain architecture, DOMON spans 50-166; the sequence is GTLELSWNIS…GTVHLVYGFL (117 aa). Intrachain disulfides connect Cys147–Cys589, Cys225–Cys276, Cys262–Cys288, Cys383–Cys496, Cys387–Cys558, and Cys459–Cys481. The N-linked (GlcNAc...) asparagine glycan is linked to Asn177. Tyr223 is a catalytic residue. Positions 255 and 256 each coordinate Cu(2+). Cu(2+)-binding residues include His326, His405, His407, and Met480. His405 is a catalytic residue. N-linked (GlcNAc...) asparagine glycosylation is present at Asn559. The interval 585–610 is disordered; it reads PTPHCPASQAQSPAGPTVLNISGGKG.

It belongs to the copper type II ascorbate-dependent monooxygenase family. As to quaternary structure, homotetramer; composed of two disulfide-linked dimers. The cofactor is Cu(2+). Post-translationally, proteolytic cleavage after the membrane-anchor leads to the release of the soluble form. N-glycosylated. As to expression, detected in chromaffin granules in the adrenal medulla (at protein level). Detected in adrenal medulla.

The protein resides in the cytoplasmic vesicle. It localises to the secretory vesicle lumen. The protein localises to the secretory vesicle. Its subcellular location is the chromaffin granule lumen. It is found in the secretory vesicle membrane. The protein resides in the chromaffin granule membrane. The catalysed reaction is dopamine + 2 L-ascorbate + O2 = (R)-noradrenaline + 2 monodehydro-L-ascorbate radical + H2O. It functions in the pathway catecholamine biosynthesis; (R)-noradrenaline biosynthesis; (R)-noradrenaline from dopamine: step 1/1. Its function is as follows. Catalyzes the hydroxylation of dopamine to noradrenaline (also known as norepinephrine), and is thus vital for regulation of these neurotransmitters. The protein is Dopamine beta-hydroxylase (DBH) of Bos taurus (Bovine).